We begin with the raw amino-acid sequence, 117 residues long: G antigen 4 (117 aa).

The tract at residues 1-117 (MSWRGRSTYY…PEEGEKQSQC (117 aa)) is disordered. Acidic residues-rich tracts occupy residues 32–45 (FSDEVEPATPEEGE) and 87–96 (ECEDGPDGQE). Residues 103–117 (EEVKTPEEGEKQSQC) show a composition bias toward basic and acidic residues.

The protein belongs to the GAGE family. In terms of tissue distribution, expressed in a variety of tumor tissues but not in normal tissues, except testis.

In terms of biological role, antigen, recognized on melanoma by autologous cytolytic T-lymphocytes. The chain is G antigen 4 from Homo sapiens (Human).